The chain runs to 343 residues: MENITVLGAGSWGTALALVLADNGHRVRLWSHRAEQVREINEQRTNEKYLPGVRLPEVIIGYDDLGAALDGVSIVVLAVPTKAIREVLQRARMCLAAPITIVAVSKGIEPGTHKRVSEIVTEEISEWLEDVVVLSGPSHAEEVVLRHPTTVAVSSPNMEAAQCIQDVFMNHHYFRVYTNPDLVGVEVGGALKNIIALAAGISDGLGYGDNAKAALITRGLAEIARLGCALGANPLTFAGLAGVGDLIVTCTSVHSRNWRAGHMLGQGKKLDDVLESMGMVVEGVRTTKAAYELAKELGVKMPITEVLYEVLFDGKNPKEAVDSLMARGKKQEMNDLMNIFAEQ.

5 residues coordinate NADPH: Ser-11, Trp-12, His-32, Arg-33, and Lys-106. Lys-106, Gly-136, and Ser-138 together coordinate sn-glycerol 3-phosphate. An NADPH-binding site is contributed by Ala-140. Positions 192, 245, 255, 256, and 257 each coordinate sn-glycerol 3-phosphate. Residue Lys-192 is the Proton acceptor of the active site. An NADPH-binding site is contributed by Arg-256. NADPH contacts are provided by Val-280 and Glu-282.

This sequence belongs to the NAD-dependent glycerol-3-phosphate dehydrogenase family.

It localises to the cytoplasm. The enzyme catalyses sn-glycerol 3-phosphate + NAD(+) = dihydroxyacetone phosphate + NADH + H(+). It catalyses the reaction sn-glycerol 3-phosphate + NADP(+) = dihydroxyacetone phosphate + NADPH + H(+). The protein operates within membrane lipid metabolism; glycerophospholipid metabolism. In terms of biological role, catalyzes the reduction of the glycolytic intermediate dihydroxyacetone phosphate (DHAP) to sn-glycerol 3-phosphate (G3P), the key precursor for phospholipid synthesis. The chain is Glycerol-3-phosphate dehydrogenase [NAD(P)+] from Geobacillus thermodenitrificans (strain NG80-2).